We begin with the raw amino-acid sequence, 559 residues long: Aminopeptidase Q (559 aa).

The Cytoplasmic segment spans residues 1–13 (MSRPFSSGVYVSR). Residues 14–34 (GVALLLAALTAVLLLVLVALA) form a helical; Signal-anchor for type II membrane protein membrane-spanning segment. Residues 35–559 (SLYGSCAHVQ…VPFRHFLAEH (525 aa)) are Lumenal-facing. N-linked (GlcNAc...) asparagine glycans are attached at residues Asn121 and Asn129. Residue Glu237 coordinates substrate. N-linked (GlcNAc...) asparagine glycosylation is found at Asn258, Asn285, and Asn343. 376 to 380 (GAMEN) is a substrate binding site. His412 is a Zn(2+) binding site. The active-site Proton acceptor is the Glu413. His416 and Glu435 together coordinate Zn(2+).

It belongs to the peptidase M1 family. In terms of assembly, homodimer. Zn(2+) serves as cofactor. In terms of processing, N-glycosylated.

It is found in the membrane. With respect to regulation, inhibited by bestatin. Functionally, metalloprotease which may be important for placentation by regulating biological activity of key peptides at the embryo-maternal interface. On synthetic substrates it shows a marked preference for Leu-4-methylcoumaryl-7-amide (Leu-MCA) over Met-MCA, Arg-LCA and Lys-LCA. Cleaves the N-terminal amino acid of several peptides such as angiotensin-3, kisspeptin-10 and endokinin C. In Mus musculus (Mouse), this protein is Aminopeptidase Q.